Reading from the N-terminus, the 799-residue chain is RasGAP-activating-like protein 1 (799 aa).

2 consecutive C2 domains span residues 1-105 (MAKS…DSWI) and 116-231 (VQGE…NGWF). Aspartate 21, aspartate 27, aspartate 74, aspartate 76, aspartate 82, aspartate 149, aspartate 155, aspartate 202, aspartate 204, and aspartate 210 together coordinate Ca(2+). The Ras-GAP domain maps to 316-544 (GLAGPFLDYL…SRVRDFLDQL (229 aa)). A Phosphothreonine modification is found at threonine 400. Residues 565–672 (TIVREGFLLK…WLSALRKASA (108 aa)) enclose the PH domain. The Btk-type zinc-finger motif lies at 674–710 (NPGKLVACHPGAFRSGRWTCCLQAERSAAGCSRTHSA). Zn(2+)-binding residues include histidine 682, cysteine 693, cysteine 694, and cysteine 704.

Requires Ca(2+) as cofactor.

Probable inhibitory regulator of the Ras-cyclic AMP pathway. Plays a role in dendrite formation by melanocytes. This chain is RasGAP-activating-like protein 1, found in Mus musculus (Mouse).